We begin with the raw amino-acid sequence, 336 residues long: WAT1-related protein At2g37450 (336 aa).

A run of 9 helical transmembrane segments spans residues 7–27, 45–65, 79–99, 115–135, 160–180, 189–209, 227–247, 255–275, and 279–299; these read ALPF…DILT, HGVA…PVIA, TFAI…ALIF, VVGT…KGPA, GAVL…LQAI, LSLA…VALV, LTIT…GGVV, FVTA…SIIF, and MYLG…LVIW. EamA domains follow at residues 63–126 and 169–298; these read VIAQ…GGIM and FSYA…YLVI.

The protein belongs to the drug/metabolite transporter (DMT) superfamily. Plant drug/metabolite exporter (P-DME) (TC 2.A.7.4) family.

It localises to the membrane. This chain is WAT1-related protein At2g37450, found in Arabidopsis thaliana (Mouse-ear cress).